The sequence spans 195 residues: Small ribosomal subunit protein uS5 (195 aa).

The S5 DRBM domain occupies 22-85 (IVEKLVHINR…EEAKKSMIRV (64 aa)). Positions 164 to 195 (QVAAKRGKKVSDVIGRRADGASAAQPAADAEG) are disordered. Basic and acidic residues predominate over residues 172–182 (KVSDVIGRRAD). Positions 183-195 (GASAAQPAADAEG) are enriched in low complexity.

It belongs to the universal ribosomal protein uS5 family. As to quaternary structure, part of the 30S ribosomal subunit. Contacts proteins S4 and S8.

With S4 and S12 plays an important role in translational accuracy. Functionally, located at the back of the 30S subunit body where it stabilizes the conformation of the head with respect to the body. The polypeptide is Small ribosomal subunit protein uS5 (Phenylobacterium zucineum (strain HLK1)).